The primary structure comprises 1203 residues: DNA-directed RNA polymerase subunit beta' (1203 aa).

Zn(2+) contacts are provided by C60, C62, C75, and C78. Mg(2+) is bound by residues D449, D451, and D453. Positions 818, 892, 899, and 902 each coordinate Zn(2+).

It belongs to the RNA polymerase beta' chain family. As to quaternary structure, the RNAP catalytic core consists of 2 alpha, 1 beta, 1 beta' and 1 omega subunit. When a sigma factor is associated with the core the holoenzyme is formed, which can initiate transcription. Mg(2+) is required as a cofactor. The cofactor is Zn(2+).

It carries out the reaction RNA(n) + a ribonucleoside 5'-triphosphate = RNA(n+1) + diphosphate. Its function is as follows. DNA-dependent RNA polymerase catalyzes the transcription of DNA into RNA using the four ribonucleoside triphosphates as substrates. The chain is DNA-directed RNA polymerase subunit beta' from Bacillus cereus (strain ATCC 10987 / NRS 248).